Reading from the N-terminus, the 470-residue chain is Nuclear receptor subfamily 0 group B member 1 (470 aa).

Repeat copies occupy residues 1–67, 68–133, and 134–200. A 4 X 67 AA tandem repeats region spans residues 1-253; that stretch reads MAGEDHQWQG…RPVALKNPQV (253 aa). Short sequence motifs (LXXLL motif) lie at residues 13–17, 80–84, and 146–150; these read LYNML, LYSML, and LYSLL. One copy of the 4; truncated repeat lies at 201-253; sequence FCGEDQPQQGSTLYSMPTSTNQTPAAPEERPGAPWWDTSCGALRPVALKNPQV. The NR LBD domain maps to 205–469; the sequence is DQPQQGSTLY…DMMLEMLCTK (265 aa). An AF-2 motif motif is present at residues 461-466; it reads MMLEML.

This sequence belongs to the nuclear hormone receptor family. NR0 subfamily. Homodimer. Interacts with NR5A1, NR5A2, NR0B2 and with COPS2. Interacts with ESRRB; represses ESRRB activity at the GATA6 promoter.

The protein localises to the nucleus. Its subcellular location is the cytoplasm. Functionally, nuclear receptor that lacks a DNA-binding domain and acts as a corepressor that inhibits the transcriptional activity of other nuclear receptors through heterodimeric interactions. Component of a cascade required for the development of the hypothalamic-pituitary-adrenal-gonadal axis. May also have a role in the development of the embryo and in the maintenance of embryonic stem cell pluripotency. The chain is Nuclear receptor subfamily 0 group B member 1 (NR0B1) from Callithrix jacchus (White-tufted-ear marmoset).